We begin with the raw amino-acid sequence, 89 residues long: Large ribosomal subunit protein eL34 (89 aa).

Residues 1–32 (MPAPRFKSGSFKKISKRGPGNKTLTHHRRSKV) are disordered.

This sequence belongs to the eukaryotic ribosomal protein eL34 family.

This Methanococcus aeolicus (strain ATCC BAA-1280 / DSM 17508 / OCM 812 / Nankai-3) protein is Large ribosomal subunit protein eL34.